A 192-amino-acid chain; its full sequence is Large ribosomal subunit protein uL5 (192 aa).

This sequence belongs to the universal ribosomal protein uL5 family. Part of the 50S ribosomal subunit; part of the 5S rRNA/L5/L18/L25 subcomplex. Contacts the 5S rRNA and the P site tRNA. Forms a bridge to the 30S subunit in the 70S ribosome.

Its function is as follows. This is one of the proteins that bind and probably mediate the attachment of the 5S RNA into the large ribosomal subunit, where it forms part of the central protuberance. In the 70S ribosome it contacts protein S13 of the 30S subunit (bridge B1b), connecting the 2 subunits; this bridge is implicated in subunit movement. Contacts the P site tRNA; the 5S rRNA and some of its associated proteins might help stabilize positioning of ribosome-bound tRNAs. This chain is Large ribosomal subunit protein uL5, found in Paenarthrobacter aurescens (strain TC1).